Here is a 125-residue protein sequence, read N- to C-terminus: Neuropeptide B (125 aa).

An N-terminal signal peptide occupies residues 1–24 (MARSATLAAAALALCLLLAPPGLA). The disordered stretch occupies residues 54-73 (RRSQPYRGAEPPGGAGASPE). The propeptide occupies 56–125 (SQPYRGAEPP…SLRAADCLAA (70 aa)).

The protein belongs to the neuropeptide B/W family. In terms of tissue distribution, widely expressed in the central nervous system. High levels are found in substantia nigra, hypothalamus, hippocampus, spinal cord, placenta and fetal brain; lower levels are found in testis, uterus and ovary. Also detected at high levels in colorectal adenocarcinoma.

It localises to the secreted. In terms of biological role, may be involved in the regulation of feeding, neuroendocrine system, memory, learning and in the afferent pain pathway. The sequence is that of Neuropeptide B (NPB) from Homo sapiens (Human).